Consider the following 105-residue polypeptide: MRISPLIAGLIGGFTAAILQALFKVFPPPAYGICIACHTRDLVNWIINHLFGTTLGMALVSKAFPVLTVVGIFIGALITTFIYKETELKQTHSPVYWFHIRNFSY.

3 helical membrane-spanning segments follow: residues 3 to 23 (ISPL…QALF), 41 to 61 (DLVN…ALVS), and 63 to 83 (AFPV…TFIY).

It is found in the cell membrane. This is an uncharacterized protein from Methanocaldococcus jannaschii (strain ATCC 43067 / DSM 2661 / JAL-1 / JCM 10045 / NBRC 100440) (Methanococcus jannaschii).